The following is a 435-amino-acid chain: Nuclear hormone receptor family member nhr-28 (435 aa).

The nuclear receptor DNA-binding region spans 5–80 (KKPCSVCGEA…VGMRKSAVQR (76 aa)). NR C4-type zinc fingers lie at residues 8 to 28 (CSVCGEAGDGAHFGAEACRAC) and 44 to 63 (CRAMGACIIQKNVRCMCRAC). The disordered stretch occupies residues 84 to 106 (LFGRQDSSDGSNPRVSPSTSWPM). Residues 91 to 104 (SDGSNPRVSPSTSW) are compositionally biased toward polar residues. Residues 113–374 (IEEPGMATLN…ETFYELVSGR (262 aa)) form the NR LBD domain.

This sequence belongs to the nuclear hormone receptor family.

Its subcellular location is the nucleus. Orphan nuclear receptor. The polypeptide is Nuclear hormone receptor family member nhr-28 (Caenorhabditis briggsae).